The chain runs to 140 residues: MGLNPQLVVILLFFLECTRSHIHGCDKNHLREIIGILNEVTGEGTPCTEMDVPNVLTATKNTTESELVCRASKVLRIFYLKHGKTPCLKKNSSVLMELQRLFRAFRCLDSSISCTMNESKSTSLKDFLESLKSIMQMDYS.

An N-terminal signal peptide occupies residues Met1 to Ser20. 3 disulfides stabilise this stretch: Cys25–Cys107, Cys47–Cys87, and Cys69–Cys114. Asn61, Asn91, and Asn117 each carry an N-linked (GlcNAc...) asparagine glycan.

This sequence belongs to the IL-4/IL-13 family. Interacts with IL4R. Interacts with IL13RA1.

Its subcellular location is the secreted. Cytokine secreted primarily by mast cells, T-cells, eosinophils, and basophils that plays a role in regulating antibody production, hematopoiesis and inflammation, and the development of effector T-cell responses. Induces the expression of class II MHC molecules on resting B-cells. Enhances both secretion and cell surface expression of IgE and IgG1. Also regulates the expression of the low affinity Fc receptor for IgE (CD23) on both lymphocytes and monocytes. Positively regulates IL31RA expression in macrophages. Stimulates autophagy in dendritic cells by interfering with mTORC1 signaling and through the induction of RUFY4. In addition, plays a critical role in higher functions of the normal brain, such as memory and learning. Upon binding to IL4, IL4R receptor dimerizes either with the common IL2R gamma chain/IL2RG to produce the type 1 signaling complex, located mainly on hematopoietic cells, or with the IL13RA1 to produce the type 2 complex, which is also expressed on nonhematopoietic cells. Engagement of both types of receptors initiates JAK3 and to a lower extend JAK1 phosphorylation leading to activation of the signal transducer and activator of transcription 6/STAT6. This chain is Interleukin-4 (Il4), found in Mus musculus (Mouse).